A 675-amino-acid polypeptide reads, in one-letter code: Potassium-transporting ATPase ATP-binding subunit 2 (675 aa).

4 helical membrane passes run I34–I54, L65–F85, I216–L236, and L245–G265. The 4-aspartylphosphate intermediate role is filled by D304. ATP-binding positions include D341, E345, F372–S379, and K390. Residues D513 and D517 each coordinate Mg(2+). 3 helical membrane passes run A569–M591, A611–M631, and I644–I664.

This sequence belongs to the cation transport ATPase (P-type) (TC 3.A.3) family. Type IA subfamily. In terms of assembly, the system is composed of three essential subunits: KdpA, KdpB and KdpC.

Its subcellular location is the cell membrane. It catalyses the reaction K(+)(out) + ATP + H2O = K(+)(in) + ADP + phosphate + H(+). In terms of biological role, part of the high-affinity ATP-driven potassium transport (or Kdp) system, which catalyzes the hydrolysis of ATP coupled with the electrogenic transport of potassium into the cytoplasm. This subunit is responsible for energy coupling to the transport system and for the release of the potassium ions to the cytoplasm. The protein is Potassium-transporting ATPase ATP-binding subunit 2 of Staphylococcus aureus (strain Mu50 / ATCC 700699).